The sequence spans 276 residues: 5'-nucleotidase SurE (276 aa).

Asp-14, Asp-15, Ser-46, and Asn-104 together coordinate a divalent metal cation.

It belongs to the SurE nucleotidase family. A divalent metal cation is required as a cofactor.

It is found in the cytoplasm. It catalyses the reaction a ribonucleoside 5'-phosphate + H2O = a ribonucleoside + phosphate. Nucleotidase that shows phosphatase activity on nucleoside 5'-monophosphates. This Crocosphaera subtropica (strain ATCC 51142 / BH68) (Cyanothece sp. (strain ATCC 51142)) protein is 5'-nucleotidase SurE.